Consider the following 601-residue polypeptide: Probable HECT-type ubiquitin ligase-interacting protein creD (601 aa).

Disordered regions lie at residues Glu-374–Ser-397 and Ser-455–His-489. Positions Pro-461–Pro-473 are enriched in low complexity. Residues Leu-475 to His-489 show a composition bias toward basic and acidic residues.

Belongs to the arrestin family. In terms of assembly, interacts with hulA.

Its function is as follows. Component of the regulatory network controlling carbon source utilization through ubiquitination and deubiquitination involving creA, creB, creC, creD and acrB. May be involved in signaling by recognizing appropriately phosphorylated substrates via its arrestin domains and then recruit a HECT-type ubiquitin ligase such as hulA, leading to ubiquitination of the substrate, providing a link between ubiquitination and phosphorylation in protein regulation and stability. The protein is Probable HECT-type ubiquitin ligase-interacting protein creD (creD) of Neosartorya fischeri (strain ATCC 1020 / DSM 3700 / CBS 544.65 / FGSC A1164 / JCM 1740 / NRRL 181 / WB 181) (Aspergillus fischerianus).